The chain runs to 238 residues: MIAFIVLLSLAAVLQQSSGTADFASESSNKKNYQKEIVDKHNALRRSVKPTARNMLQMKWNSRAAQNAKRWANRCTFAHSPPNKRTVGKLRCGENIFMSSQPFPWSGVVQAWYDEIKNFVYGIGAKPPGSVIGHYTQVVWYKSYLIGCASAKCSSSKYLYVCQYCPAGNIRGSIATPYKSGPPCADCPSACVNKLCTNPCKRNNDFSNCKSLAKKSKCQTEWIKKKCPASCFCHNKII.

The first 19 residues, 1–19 (MIAFIVLLSLAAVLQQSSG), serve as a signal peptide directing secretion. Positions 20 to 27 (TADFASES) are excised as a propeptide. An SCP domain is found at 38-164 (VDKHNALRRS…SSKYLYVCQY (127 aa)). Positions 51 and 106 each coordinate Zn(2+). Disulfide bonds link cysteine 75–cysteine 153, cysteine 92–cysteine 165, cysteine 148–cysteine 162, cysteine 184–cysteine 191, cysteine 187–cysteine 196, cysteine 200–cysteine 233, cysteine 209–cysteine 227, and cysteine 218–cysteine 231. Residues 200–233 (CKRNNDFSNCKSLAKKSKCQTEWIKKKCPASCFC) form the ShKT domain.

Expressed by the venom gland.

It localises to the secreted. Blocks olfactory (CNGA2) and retinal (CNGA1) cyclic nucleotide-gated (CNG) ion channel currents. Does not inhibit retinal (CNGA3) currents. It forms high-affinity contacts with the pore turret region and most likely inhibits CNG channel current by blocking the external entrance to the transmembrane pore. Is really more potent that Pseudecin. Does not affect neither depolarization- nor caffeine-induced contraction arterial smooth muscle. The sequence is that of Cysteine-rich venom protein pseudechetoxin from Pseudechis australis (Mulga snake).